A 1976-amino-acid chain; its full sequence is Putative callose synthase 8 (1976 aa).

Over Met1–Arg530 the chain is Cytoplasmic. Residues Met531–Gly551 form a helical membrane-spanning segment. Residues Ser552–Val565 lie on the Extracellular side of the membrane. Residues Met566–Phe586 form a helical membrane-spanning segment. Residues Lys587–Arg602 are Cytoplasmic-facing. The chain crosses the membrane as a helical span at residues Leu603 to Ser623. Residues Arg624–Val648 are Extracellular-facing. A helical membrane pass occupies residues Ala649–Ile669. Residues Ser670–Lys707 are Cytoplasmic-facing. The chain crosses the membrane as a helical span at residues Tyr708–Ile728. Over Lys729–Ala759 the chain is Extracellular. Residues Ala760–Trp780 form a helical membrane-spanning segment. Topologically, residues Tyr781–Tyr1544 are cytoplasmic. A helical membrane pass occupies residues Phe1545–Leu1565. Residues Tyr1566–Ala1595 lie on the Extracellular side of the membrane. Residues Leu1596–Ile1616 form a helical membrane-spanning segment. Over Gly1617–Lys1620 the chain is Cytoplasmic. A helical transmembrane segment spans residues Gly1621–Phe1641. Topologically, residues Thr1642–His1688 are extracellular. An N-linked (GlcNAc...) asparagine glycan is attached at Asn1676. Residues Phe1689 to Ser1709 traverse the membrane as a helical segment. The Cytoplasmic portion of the chain corresponds to Gln1710–Tyr1715. A helical transmembrane segment spans residues Ser1716 to Phe1736. Residues Asn1737–Arg1790 are Extracellular-facing. The chain crosses the membrane as a helical span at residues Cys1791–Leu1811. Topologically, residues Asp1812–Asn1819 are cytoplasmic. Residues Ile1820–Val1840 traverse the membrane as a helical segment. Over Asp1841–Arg1856 the chain is Extracellular. Residues Phe1857–Cys1877 traverse the membrane as a helical segment. The Cytoplasmic segment spans residues His1878–Leu1884. A helical transmembrane segment spans residues Leu1885–Val1905. At Arg1906 to Gly1928 the chain is on the extracellular side. The chain crosses the membrane as a helical span at residues Met1929–Phe1949. At Gln1950–Arg1976 the chain is on the cytoplasmic side.

This sequence belongs to the glycosyltransferase 48 family.

It is found in the cell membrane. It catalyses the reaction [(1-&gt;3)-beta-D-glucosyl](n) + UDP-alpha-D-glucose = [(1-&gt;3)-beta-D-glucosyl](n+1) + UDP + H(+). In terms of biological role, involved in callose synthesis at the forming cell plate during cytokinesis. During plant growth and development, callose is found as a transitory component of the cell plate in dividing cells, is a major component of pollen mother cell walls and pollen tubes, and is found as a structural component of plasmodesmatal canals. The polypeptide is Putative callose synthase 8 (CALS8) (Arabidopsis thaliana (Mouse-ear cress)).